The chain runs to 385 residues: 1-deoxy-D-xylulose 5-phosphate reductoisomerase (385 aa).

Thr11, Gly12, Ser13, Ile14, Gln39, and Asn117 together coordinate NADPH. Position 118 (Lys118) interacts with 1-deoxy-D-xylulose 5-phosphate. Glu119 contacts NADPH. Residue Asp143 participates in Mn(2+) binding. Positions 144, 145, 170, and 193 each coordinate 1-deoxy-D-xylulose 5-phosphate. Glu145 lines the Mn(2+) pocket. Gly199 serves as a coordination point for NADPH. 1-deoxy-D-xylulose 5-phosphate-binding residues include Ser206, Asn211, Lys212, and Glu215. Glu215 serves as a coordination point for Mn(2+).

It belongs to the DXR family. The cofactor is Mg(2+). Mn(2+) is required as a cofactor.

It catalyses the reaction 2-C-methyl-D-erythritol 4-phosphate + NADP(+) = 1-deoxy-D-xylulose 5-phosphate + NADPH + H(+). It functions in the pathway isoprenoid biosynthesis; isopentenyl diphosphate biosynthesis via DXP pathway; isopentenyl diphosphate from 1-deoxy-D-xylulose 5-phosphate: step 1/6. Its function is as follows. Catalyzes the NADPH-dependent rearrangement and reduction of 1-deoxy-D-xylulose-5-phosphate (DXP) to 2-C-methyl-D-erythritol 4-phosphate (MEP). This Thermomicrobium roseum (strain ATCC 27502 / DSM 5159 / P-2) protein is 1-deoxy-D-xylulose 5-phosphate reductoisomerase.